We begin with the raw amino-acid sequence, 318 residues long: Ribose-phosphate pyrophosphokinase 1 (318 aa).

ATP contacts are provided by residues 43 to 45 (DGE) and 102 to 103 (RQ). 2 residues coordinate Mg(2+): His-136 and Asp-176. Lys-199 is an active-site residue. Residues Arg-201, Asp-225, and 229–233 (DTAGT) each bind D-ribose 5-phosphate.

This sequence belongs to the ribose-phosphate pyrophosphokinase family. Class I subfamily. As to quaternary structure, homohexamer. Mg(2+) serves as cofactor.

It is found in the cytoplasm. It catalyses the reaction D-ribose 5-phosphate + ATP = 5-phospho-alpha-D-ribose 1-diphosphate + AMP + H(+). It participates in metabolic intermediate biosynthesis; 5-phospho-alpha-D-ribose 1-diphosphate biosynthesis; 5-phospho-alpha-D-ribose 1-diphosphate from D-ribose 5-phosphate (route I): step 1/1. In terms of biological role, involved in the biosynthesis of the central metabolite phospho-alpha-D-ribosyl-1-pyrophosphate (PRPP) via the transfer of pyrophosphoryl group from ATP to 1-hydroxyl of ribose-5-phosphate (Rib-5-P). The polypeptide is Ribose-phosphate pyrophosphokinase 1 (Listeria innocua serovar 6a (strain ATCC BAA-680 / CLIP 11262)).